Consider the following 544-residue polypeptide: CTP synthase (544 aa).

Residues 1–265 (MTQYIFITGG…DDLVVKHFGL (265 aa)) form an amidoligase domain region. Position 13 (S13) interacts with CTP. Residue S13 participates in UTP binding. Residues 14-19 (SLGKGI) and D71 each bind ATP. Mg(2+)-binding residues include D71 and E139. CTP is bound by residues 146-148 (DIE), 186-191 (KTKPTQ), and K222. Residues 186 to 191 (KTKPTQ) and K222 contribute to the UTP site. In terms of domain architecture, Glutamine amidotransferase type-1 spans 290–541 (TVAMVGKYVN…IAAALDYQTE (252 aa)). Position 351 (G351) interacts with L-glutamine. C378 acts as the Nucleophile; for glutamine hydrolysis in catalysis. L-glutamine-binding positions include 379–382 (LGLQ), E402, and R469. Residues H514 and E516 contribute to the active site.

The protein belongs to the CTP synthase family. Homotetramer.

The enzyme catalyses UTP + L-glutamine + ATP + H2O = CTP + L-glutamate + ADP + phosphate + 2 H(+). The catalysed reaction is L-glutamine + H2O = L-glutamate + NH4(+). It carries out the reaction UTP + NH4(+) + ATP = CTP + ADP + phosphate + 2 H(+). The protein operates within pyrimidine metabolism; CTP biosynthesis via de novo pathway; CTP from UDP: step 2/2. Allosterically activated by GTP, when glutamine is the substrate; GTP has no effect on the reaction when ammonia is the substrate. The allosteric effector GTP functions by stabilizing the protein conformation that binds the tetrahedral intermediate(s) formed during glutamine hydrolysis. Inhibited by the product CTP, via allosteric rather than competitive inhibition. Functionally, catalyzes the ATP-dependent amination of UTP to CTP with either L-glutamine or ammonia as the source of nitrogen. Regulates intracellular CTP levels through interactions with the four ribonucleotide triphosphates. The sequence is that of CTP synthase from Dichelobacter nodosus (strain VCS1703A).